The chain runs to 478 residues: Catalase easC (478 aa).

Residue His54 is part of the active site. A heme-binding site is contributed by Tyr343. The interval 459–478 (VAEKARPDSPSRAQPGQLRL) is disordered.

This sequence belongs to the catalase family. The cofactor is heme.

It functions in the pathway alkaloid biosynthesis; ergot alkaloid biosynthesis. Catalase; part of the gene cluster that mediates the biosynthesis of fungal ergot alkaloid. DmaW catalyzes the first step of ergot alkaloid biosynthesis by condensing dimethylallyl diphosphate (DMAP) and tryptophan to form 4-dimethylallyl-L-tryptophan. The second step is catalyzed by the methyltransferase easF that methylates 4-dimethylallyl-L-tryptophan in the presence of S-adenosyl-L-methionine, resulting in the formation of 4-dimethylallyl-L-abrine. The catalase easC and the FAD-dependent oxidoreductase easE then transform 4-dimethylallyl-L-abrine to chanoclavine-I which is further oxidized by easD in the presence of NAD(+), resulting in the formation of chanoclavine-I aldehyde. Chanoclavine-I aldehyde is the precursor of ergoamides and ergopeptines in Clavicipitaceae, and clavine-type alcaloids such as fumiclavine in Trichocomaceae. However, the metabolites downstream of chanoclavine-I aldehyde in Arthrodermataceae have not been identified yet. The protein is Catalase easC of Arthroderma benhamiae (strain ATCC MYA-4681 / CBS 112371) (Trichophyton mentagrophytes).